Here is a 172-residue protein sequence, read N- to C-terminus: Adenine phosphoribosyltransferase (172 aa).

This sequence belongs to the purine/pyrimidine phosphoribosyltransferase family. As to quaternary structure, homodimer.

It is found in the cytoplasm. It catalyses the reaction AMP + diphosphate = 5-phospho-alpha-D-ribose 1-diphosphate + adenine. It participates in purine metabolism; AMP biosynthesis via salvage pathway; AMP from adenine: step 1/1. Functionally, catalyzes a salvage reaction resulting in the formation of AMP, that is energically less costly than de novo synthesis. This Gloeothece citriformis (strain PCC 7424) (Cyanothece sp. (strain PCC 7424)) protein is Adenine phosphoribosyltransferase.